A 232-amino-acid polypeptide reads, in one-letter code: Dehydrin DHN3 (232 aa).

The segment covering 1-14 has biased composition (polar residues); the sequence is MSQYQNQYGAQTGM. Disordered stretches follow at residues 1–66 and 140–232; these read MSQY…QHRG and EHHG…CTGH. Positions 49 to 60 are enriched in gly residues; the sequence is TTGGATGQGHGH. Positions 140–157 are enriched in basic and acidic residues; it reads EHHGDKKGVMDKIKEKIP. Positions 159–168 are enriched in polar residues; it reads TEQSRTNTDG. The segment covering 198–223 has biased composition (basic and acidic residues); sequence EQQDVHHGDEQHGEKKGIMEKIKEKL.

Belongs to the plant dehydrin family.

This chain is Dehydrin DHN3 (DHN3), found in Pisum sativum (Garden pea).